The sequence spans 128 residues: Glycine cleavage system H protein (128 aa).

A Lipoyl-binding domain is found at 23 to 105; it reads KVRIGITDFA…YEKAWMIVVE (83 aa). N6-lipoyllysine is present on lysine 64.

It belongs to the GcvH family. In terms of assembly, the glycine cleavage system is composed of four proteins: P, T, L and H. The cofactor is (R)-lipoate.

In terms of biological role, the glycine cleavage system catalyzes the degradation of glycine. The H protein shuttles the methylamine group of glycine from the P protein to the T protein. Is also involved in protein lipoylation via its role as an octanoyl/lipoyl carrier protein intermediate. The sequence is that of Glycine cleavage system H protein from Halalkalibacterium halodurans (strain ATCC BAA-125 / DSM 18197 / FERM 7344 / JCM 9153 / C-125) (Bacillus halodurans).